A 163-amino-acid chain; its full sequence is Protein FAM167B (163 aa).

The stretch at 73 to 132 forms a coiled coil; sequence FDSMDSALEWLRRELREMQAQDRQLAGQLLRLRAQLHRLKMDQACHLHQELLDEAELELE.

Belongs to the FAM167 (SEC) family.

In Homo sapiens (Human), this protein is Protein FAM167B (FAM167B).